The primary structure comprises 186 residues: Meiotically up-regulated gene 163 protein (186 aa).

The protein resides in the mitochondrion. In terms of biological role, has a role in meiosis. This is Meiotically up-regulated gene 163 protein (mug163) from Schizosaccharomyces pombe (strain 972 / ATCC 24843) (Fission yeast).